The primary structure comprises 478 residues: Protein nucleotidyltransferase YdiU (478 aa).

Residues glycine 84, glycine 86, arginine 87, lysine 107, aspartate 119, glycine 120, arginine 170, and arginine 177 each contribute to the ATP site. Aspartate 246 serves as the catalytic Proton acceptor. 2 residues coordinate Mg(2+): asparagine 247 and aspartate 256. Aspartate 256 lines the ATP pocket.

It belongs to the SELO family. Mg(2+) is required as a cofactor. The cofactor is Mn(2+).

It catalyses the reaction L-seryl-[protein] + ATP = 3-O-(5'-adenylyl)-L-seryl-[protein] + diphosphate. The enzyme catalyses L-threonyl-[protein] + ATP = 3-O-(5'-adenylyl)-L-threonyl-[protein] + diphosphate. It carries out the reaction L-tyrosyl-[protein] + ATP = O-(5'-adenylyl)-L-tyrosyl-[protein] + diphosphate. The catalysed reaction is L-histidyl-[protein] + UTP = N(tele)-(5'-uridylyl)-L-histidyl-[protein] + diphosphate. It catalyses the reaction L-seryl-[protein] + UTP = O-(5'-uridylyl)-L-seryl-[protein] + diphosphate. The enzyme catalyses L-tyrosyl-[protein] + UTP = O-(5'-uridylyl)-L-tyrosyl-[protein] + diphosphate. Nucleotidyltransferase involved in the post-translational modification of proteins. It can catalyze the addition of adenosine monophosphate (AMP) or uridine monophosphate (UMP) to a protein, resulting in modifications known as AMPylation and UMPylation. This Escherichia coli O157:H7 protein is Protein nucleotidyltransferase YdiU.